The chain runs to 316 residues: Small ribosomal subunit protein RACK1 (316 aa).

WD repeat units lie at residues 4–46, 52–93, 94–135, 137–180, 181–221, 222–263, and 264–312; these read QMTL…WRLT, YGVP…WDLS, TGQT…WNTL, VCKY…WNLT, NCKL…LWDL, NEGK…WDLE, and GKVV…WQVS.

It belongs to the WD repeat G protein beta family. Ribosomal protein RACK1 subfamily.

This chain is Small ribosomal subunit protein RACK1, found in Biomphalaria glabrata (Bloodfluke planorb).